The following is a 192-amino-acid chain: 7-methyl-GTP pyrophosphatase (192 aa).

D70 acts as the Proton acceptor in catalysis.

This sequence belongs to the Maf family. YceF subfamily. Requires a divalent metal cation as cofactor.

It is found in the cytoplasm. It carries out the reaction N(7)-methyl-GTP + H2O = N(7)-methyl-GMP + diphosphate + H(+). Its function is as follows. Nucleoside triphosphate pyrophosphatase that hydrolyzes 7-methyl-GTP (m(7)GTP). May have a dual role in cell division arrest and in preventing the incorporation of modified nucleotides into cellular nucleic acids. In Xanthomonas campestris pv. campestris (strain 8004), this protein is 7-methyl-GTP pyrophosphatase.